The following is an 834-amino-acid chain: Structure-specific endonuclease subunit SLX4 (834 aa).

6 disordered regions span residues 80–105 (RVPR…KTTT), 272–307 (TVPA…QKGK), 332–372 (QNVA…GRPV), 401–421 (GYPE…SNSA), 603–649 (ESKP…AKAL), and 720–740 (ATPN…SIEP). Positions 279–295 (PTESSTTEDVQGSSSKQ) are enriched in polar residues. The span at 296–305 (QRVKAKKPQK) shows a compositional bias: basic residues. Polar residues-rich tracts occupy residues 345–366 (SNRP…TLKN) and 412–421 (DTQNSPSNSA). The span at 611-630 (DDARKNGFRKENHSDVRVRP) shows a compositional bias: basic and acidic residues. Residues 729-740 (QGSSSASFSIEP) show a composition bias toward low complexity.

This sequence belongs to the SLX4 family. As to quaternary structure, forms a heterodimer with SLX1. Phosphorylated in response to DNA damage.

Its subcellular location is the nucleus. Functionally, regulatory subunit of the SLX1-SLX4 structure-specific endonuclease that resolves DNA secondary structures generated during DNA repair and recombination. Has endonuclease activity towards branched DNA substrates, introducing single-strand cuts in duplex DNA close to junctions with ss-DNA. In Ajellomyces capsulatus (strain NAm1 / WU24) (Darling's disease fungus), this protein is Structure-specific endonuclease subunit SLX4.